A 409-amino-acid chain; its full sequence is Secreted LysM effector Blys2 (409 aa).

The first 20 residues, 1–20 (MTRFTTTLVAALAGANLAAA), serve as a signal peptide directing secretion. The LysM 1 domain maps to 24–71 (YKWRAHAGDTCDSLSSDWSVQVSDFIKWNPSVGANCSNGVTAGQEYCV). Residue asparagine 58 is glycosylated (N-linked (GlcNAc...) asparagine). Residues 74–111 (NGAGSKPTTPPTGSPTTLTTAVTTASSTPTQPTDGAPS) are disordered. Residues 87–106 (SPTTLTTAVTTASSTPTQPT) show a composition bias toward low complexity. 4 LysM domains span residues 129–176 (AWYK…YVCV), 206–253 (KWYK…FVCV), 283–330 (KFYK…YYCI), and 357–405 (KYYK…YICV).

Belongs to the secreted LysM effector family.

It is found in the secreted. It localises to the cell wall. Functionally, secreted effector that enables the plant pathogenic fungus to manipulate host defenses for successful infection. Required for the full virulence to infect insect hosts. In contrast to Blys5, Blys2 is not able to protect fungal hyphae against the hydrolytic activity of chitinase but plays an important role in evasion of insect immunities. Binds chitin. Coats and protects the cell walls of insect pathogens from host cell recognition. The sequence is that of Secreted LysM effector Blys2 from Beauveria bassiana (strain ARSEF 2860) (White muscardine disease fungus).